Consider the following 344-residue polypeptide: Holliday junction branch migration complex subunit RuvB (344 aa).

The segment at 1 to 185 (MTERSDRDVS…FGFTAHMDFY (185 aa)) is large ATPase domain (RuvB-L). ATP contacts are provided by residues L24, R25, G66, K69, T70, S71, 132 to 134 (EDF), R175, Y185, and R222. Position 70 (T70) interacts with Mg(2+). The interval 186 to 256 (EPAELERVLA…VAKAALEVYD (71 aa)) is small ATPAse domain (RuvB-S). Residues 259 to 344 (ELGLDRLDRA…VGASQPGLFE (86 aa)) are head domain (RuvB-H). DNA is bound by residues R314 and R319.

It belongs to the RuvB family. In terms of assembly, homohexamer. Forms an RuvA(8)-RuvB(12)-Holliday junction (HJ) complex. HJ DNA is sandwiched between 2 RuvA tetramers; dsDNA enters through RuvA and exits via RuvB. An RuvB hexamer assembles on each DNA strand where it exits the tetramer. Each RuvB hexamer is contacted by two RuvA subunits (via domain III) on 2 adjacent RuvB subunits; this complex drives branch migration. In the full resolvosome a probable DNA-RuvA(4)-RuvB(12)-RuvC(2) complex forms which resolves the HJ.

The protein resides in the cytoplasm. The enzyme catalyses ATP + H2O = ADP + phosphate + H(+). The RuvA-RuvB-RuvC complex processes Holliday junction (HJ) DNA during genetic recombination and DNA repair, while the RuvA-RuvB complex plays an important role in the rescue of blocked DNA replication forks via replication fork reversal (RFR). RuvA specifically binds to HJ cruciform DNA, conferring on it an open structure. The RuvB hexamer acts as an ATP-dependent pump, pulling dsDNA into and through the RuvAB complex. RuvB forms 2 homohexamers on either side of HJ DNA bound by 1 or 2 RuvA tetramers; 4 subunits per hexamer contact DNA at a time. Coordinated motions by a converter formed by DNA-disengaged RuvB subunits stimulates ATP hydrolysis and nucleotide exchange. Immobilization of the converter enables RuvB to convert the ATP-contained energy into a lever motion, pulling 2 nucleotides of DNA out of the RuvA tetramer per ATP hydrolyzed, thus driving DNA branch migration. The RuvB motors rotate together with the DNA substrate, which together with the progressing nucleotide cycle form the mechanistic basis for DNA recombination by continuous HJ branch migration. Branch migration allows RuvC to scan DNA until it finds its consensus sequence, where it cleaves and resolves cruciform DNA. The sequence is that of Holliday junction branch migration complex subunit RuvB from Mycobacterium tuberculosis (strain ATCC 25177 / H37Ra).